Here is a 194-residue protein sequence, read N- to C-terminus: RNA polymerase II subunit A C-terminal domain phosphatase SSU72 like protein 6 (194 aa).

This sequence belongs to the SSU72 phosphatase family.

It localises to the nucleus. The catalysed reaction is O-phospho-L-seryl-[protein] + H2O = L-seryl-[protein] + phosphate. It catalyses the reaction O-phospho-L-threonyl-[protein] + H2O = L-threonyl-[protein] + phosphate. Protein phosphatase that catalyzes the dephosphorylation of the C-terminal domain of RNA polymerase II. Plays a role in RNA processing and termination. The protein is RNA polymerase II subunit A C-terminal domain phosphatase SSU72 like protein 6 of Homo sapiens (Human).